Reading from the N-terminus, the 441-residue chain is MREIVHIQAGQCGNQIGSKFWEVISDEHGIDPTGQYVGDSDLQLERINVYYNEAGSNKYVPRAVLVDLEPGTMDSVRSGPFGQLFRPDNYVFGQSGAGNNWAKGHYTEGAELVDNVLDVVRKEAESTDCLQGFQLTHSLGGGTGSGMGTLLISKIREEYPDRIMNTFSVVPSPKVSDTVVEPYNATLSVHQLVENTDETFCIDNEALYDICFRTLKLTTPTYGDLNHLVSATMSGVTTCLRFPGQLNADLRKLAVNMVPFPRLHFFMPGFAPLTSRSNQQYRAITVPELTQQCFDAKNMMAACDPRHGRYLTAAAIFRGRMSMKEVDEQMLNIQNKNSSYFVDWIPNNVKTAVCDIPPRGLKMSATFIGNSTAIQELFKRISEQFTAMFRRKAFLHWYTGEGMDEMEFTEAESNMNDLVSEYQQYQEAAADEDAAEAFDGE.

8 residues coordinate GTP: Gln11, Glu69, Ser138, Gly142, Thr143, Gly144, Asn204, and Asn226. Glu69 serves as a coordination point for Mg(2+).

This sequence belongs to the tubulin family. Dimer of alpha and beta chains. A typical microtubule is a hollow water-filled tube with an outer diameter of 25 nm and an inner diameter of 15 nM. Alpha-beta heterodimers associate head-to-tail to form protofilaments running lengthwise along the microtubule wall with the beta-tubulin subunit facing the microtubule plus end conferring a structural polarity. Microtubules usually have 13 protofilaments but different protofilament numbers can be found in some organisms and specialized cells. The cofactor is Mg(2+). As to expression, expressed primarily in touch receptor neurons.

It is found in the cytoplasm. It localises to the cytoskeleton. Functionally, tubulin is the major constituent of microtubules, a cylinder consisting of laterally associated linear protofilaments composed of alpha- and beta-tubulin heterodimers. Microtubules grow by the addition of GTP-tubulin dimers to the microtubule end, where a stabilizing cap forms. Below the cap, tubulin dimers are in GDP-bound state, owing to GTPase activity of alpha-tubulin. Plays a role in mechanosensory transduction (touch sensitivity). Mec-7 beta-tubulin is required for the production of 15-protofilament microtubules. The sequence is that of Tubulin beta-1 chain (mec-7) from Caenorhabditis briggsae.